We begin with the raw amino-acid sequence, 3095 residues long: Centrosome-associated protein 350 (3095 aa).

Disordered stretches follow at residues 1-24 (MRSSKSKEVPLPNPRNSQSKETIQ) and 63-105 (TKKS…RSPL). Polar residues predominate over residues 14–24 (PRNSQSKETIQ). Ser84 and Ser140 each carry phosphoserine. Disordered regions lie at residues 219-239 (DEMPNRTKGSENNSKPSLNNM), 251-272 (SDSSPSSSACNSQRSDISKRQQ), and 430-493 (KILG…RAWS). Over residues 228–238 (SENNSKPSLNN) the composition is skewed to polar residues. The span at 251–265 (SDSSPSSSACNSQRS) shows a compositional bias: low complexity. 2 stretches are compositionally biased toward basic and acidic residues: residues 438–457 (MEQKERRPTSNDRSGRERVA) and 464–476 (GRAESDPKLDVSH). Ser468 bears the Phosphoserine mark. Positions 481 to 491 (RSSARSRSSRA) are enriched in low complexity. Ser503 is modified (phosphoserine). Disordered regions lie at residues 538-623 (QAVR…QKNK) and 671-718 (ARQH…PPQP). Composition is skewed to basic and acidic residues over residues 587–623 (YDTDEVRQYIVRQQEERRRRQHEEKKAQKEATEQKNK) and 690–699 (ESDKENKIQE). Positions 596 to 641 (IVRQQEERRRRQHEEKKAQKEATEQKNKRLQELYRRQREAFSKAKT) form a coiled coil. Ser691 carries the phosphoserine modification. Residues 701–714 (PPSASSSSDLSLSE) show a composition bias toward low complexity. Residues Ser874 and Ser935 each carry the phosphoserine modification. The disordered stretch occupies residues 977 to 996 (SVSEGPLLSEGSLSEEEERR). Residues 979 to 988 (SEGPLLSEGS) show a composition bias toward low complexity. Position 1057 is a phosphoserine (Ser1057). 2 disordered regions span residues 1099-1128 (YEDDFVSSPGSGTLTERKSTLESQVDGSSL) and 1151-1265 (QHSS…SQKL). The segment covering 1119–1128 (LESQVDGSSL) has biased composition (polar residues). A compositionally biased stretch (low complexity) spans 1153-1168 (SSGARSAGSTRSSSAS). Positions 1194–1206 (DEEKVQSDSERGS) are enriched in basic and acidic residues. Ser1200 carries the post-translational modification Phosphoserine. Residues 1251–1265 (QKTPTSPLSPSSQKL) show a composition bias toward low complexity. Residue Thr1253 is modified to Phosphothreonine. 2 positions are modified to phosphoserine: Ser1256 and Ser1259. Positions 1363–1402 (IKAQQQRHERDLALLKLKAEQEALECQRQLEETRNKTAQV) form a coiled coil. 4 disordered regions span residues 1490 to 1668 (AETD…GQDS), 1720 to 1739 (LRDKGEDDKMPPLRKKQRGL), 1787 to 1864 (KLKS…QRRQ), and 1893 to 2017 (AWDK…PVKS). Over residues 1503 to 1513 (QSKEGAVDSKR) the composition is skewed to basic and acidic residues. 2 stretches are compositionally biased toward low complexity: residues 1517–1526 (SPSRDSYSES) and 1536–1545 (SSGSSRQDSP). Positions 1551–1564 (KENEKPFHGEKMES) are enriched in basic and acidic residues. Residue Ser1606 is modified to Phosphoserine. A compositionally biased stretch (basic and acidic residues) spans 1624–1640 (ESHRRFNMEKKRGHHDD). Phosphoserine is present on residues Ser1641 and Ser1646. Residues 1700 to 1793 (KALKEKTKAE…LQEKLKSAGE (94 aa)) adopt a coiled-coil conformation. Residues 1787 to 1796 (KLKSAGEKKL) are compositionally biased toward basic and acidic residues. Phosphoserine is present on Ser1812. Over residues 1819–1835 (ETRSPSPISISSSETSS) the composition is skewed to low complexity. Composition is skewed to basic and acidic residues over residues 1845–1864 (SRMDEKFLTKREQKLMQRRQ) and 1894–1915 (WDKELVKPRTPKKEQESQRTEQ). Positions 1850–1893 (KFLTKREQKLMQRRQHAEELLEWKRRLDAEEAEIQQMEKQALAA) form a coiled coil. At Ser1930 the chain carries Phosphoserine. The segment covering 1980–1994 (STSPSKHSPPKSCLS) has biased composition (low complexity). Basic and acidic residues predominate over residues 1999–2011 (ESSKASHRTEGHC). The stretch at 2043-2092 (IEGRIRALKDELRKRKSVVEQLKREQRKRQKERLKAQEASLLRQLETYDE) forms a coiled coil. Ser2108 carries the post-translational modification Phosphoserine. Disordered stretches follow at residues 2116 to 2155 (KTLSSVSEKPKIKPHPLHRSETAKTWKSVTESERSRGSLA), 2191 to 2265 (IEHL…VEDA), 2286 to 2427 (LSSK…EISE), and 2440 to 2471 (VHSERLLELRSPTELMKSKERSDVGHEQGGTE). Residues 2133–2151 (HRSETAKTWKSVTESERSR) are compositionally biased toward basic and acidic residues. Ser2198 carries the phosphoserine modification. 2 stretches are compositionally biased toward basic and acidic residues: residues 2202 to 2214 (SSRKAQTESRDSL) and 2227 to 2259 (NAPDRIYDVSEAKAEDTSQKSEIQEIESMKLES). The segment covering 2286-2300 (LSSKELPSDSANVQQ) has biased composition (polar residues). Residues 2301 to 2331 (DLDKPATETSHEKEEALKEDQSNHSTDDRSP) are compositionally biased toward basic and acidic residues. The span at 2349 to 2362 (DSTCSGQLSVPKES) shows a compositional bias: polar residues. Composition is skewed to basic and acidic residues over residues 2377–2387 (ISADEISKDDS) and 2395–2407 (LRKDSQSHRDRSQ). Residues 2409 to 2420 (TRSSRSRATGSG) show a composition bias toward low complexity. Phosphoserine is present on residues Ser2421 and Ser2450. Residues 2455–2465 (MKSKERSDVGH) show a composition bias toward basic and acidic residues. The CAP-Gly domain occupies 2504 to 2546 (GETDFAKGFWAGVELDKPEGNNNGTYDGIVYFVCKDKHGIFAP). Thr2671 carries the phosphothreonine modification. Residues 2700–2731 (LLDLLTREKNQLEAQLKSSISEEKKSKQQLET) adopt a coiled-coil conformation. The segment at 2767 to 2793 (QEFLDQKKVPPQDLPQNTEEQSPSVPS) is disordered. Positions 2780–2791 (LPQNTEEQSPSV) are enriched in polar residues. Phosphoserine is present on residues Ser2809 and Ser2818.

Part of a ternary complex that contains CEP350, CEP43 and MAPRE1. Interacts (via C-terminus) directly with CEP43 (via N-terminus). Interacts with NR1H3, PPARA, PPARD and PPARG. Interacts directly with microtubules. Interacts with the fusion protein CEP43-FGFR1, and by doing so recruits and activates PI3K and PLC-gamma. Interacts with CYLD. Interacts with CFAP157. Interacts with CEP19 (via C-terminus). Interacts with CEP78; promoting CEP78 localization to centrosome and centriole. Post-translationally, phosphorylated during mitosis.

It is found in the cytoplasm. It localises to the cytoskeleton. The protein resides in the microtubule organizing center. Its subcellular location is the centrosome. The protein localises to the spindle. It is found in the nucleus. It localises to the centriole. The protein resides in the cilium basal body. Its function is as follows. Plays an essential role in centriole growth by stabilizing a procentriolar seed composed of at least, SASS6 and CPAP. Required for anchoring microtubules to the centrosomes and for the integrity of the microtubule network. Recruits PPARA to discrete subcellular compartments and thereby modulates PPARA activity. Required for ciliation. This is Centrosome-associated protein 350 from Mus musculus (Mouse).